The sequence spans 154 residues: 3-dehydroquinate dehydratase (154 aa).

Tyrosine 23 (proton acceptor) is an active-site residue. Substrate is bound by residues asparagine 75, histidine 81, and aspartate 88. The active-site Proton donor is histidine 101. Substrate is bound by residues 102–103 and arginine 112; that span reads LS.

It belongs to the type-II 3-dehydroquinase family. In terms of assembly, homododecamer.

The enzyme catalyses 3-dehydroquinate = 3-dehydroshikimate + H2O. It participates in metabolic intermediate biosynthesis; chorismate biosynthesis; chorismate from D-erythrose 4-phosphate and phosphoenolpyruvate: step 3/7. Catalyzes a trans-dehydration via an enolate intermediate. The sequence is that of 3-dehydroquinate dehydratase from Teredinibacter turnerae (strain ATCC 39867 / T7901).